Consider the following 120-residue polypeptide: Large ribosomal subunit protein uL18 (120 aa).

This sequence belongs to the universal ribosomal protein uL18 family. As to quaternary structure, part of the 50S ribosomal subunit; part of the 5S rRNA/L5/L18/L25 subcomplex. Contacts the 5S and 23S rRNAs.

Its function is as follows. This is one of the proteins that bind and probably mediate the attachment of the 5S RNA into the large ribosomal subunit, where it forms part of the central protuberance. This Afipia carboxidovorans (strain ATCC 49405 / DSM 1227 / KCTC 32145 / OM5) (Oligotropha carboxidovorans) protein is Large ribosomal subunit protein uL18.